Reading from the N-terminus, the 166-residue chain is Disulfide bond formation protein B (166 aa).

Topologically, residues 1–10 are cytoplasmic; the sequence is MGLNITNRQG. A helical membrane pass occupies residues 11–27; it reads FLLVAAACAGAIGFALF. The Periplasmic segment spans residues 28-45; the sequence is AQYQLGEEPCPLCILQRI. A disulfide bridge connects residues cysteine 37 and cysteine 40. Residues 46 to 62 form a helical membrane-spanning segment; the sequence is GVMAVGALALLAALHNP. Topologically, residues 63–69 are cytoplasmic; sequence GKTGAKV. The chain crosses the membrane as a helical span at residues 70-86; it reads WGGLMTLAALSGAGVSL. Over 87–143 the chain is Periplasmic; it reads RQLWLQSLPADQVPQCGPGLEFLMESFPLWEVLSKVLKGSGECAAIQGRFLGMTMPF. Cysteine 102 and cysteine 129 form a disulfide bridge. Residues 144–162 form a helical membrane-spanning segment; that stretch reads WVAVFFAGVIVWTLWLVGR. Residues 163–166 lie on the Cytoplasmic side of the membrane; that stretch reads RRRG.

This sequence belongs to the DsbB family.

Its subcellular location is the cell inner membrane. Its function is as follows. Required for disulfide bond formation in some periplasmic proteins. Acts by oxidizing the DsbA protein. This is Disulfide bond formation protein B from Chromobacterium violaceum (strain ATCC 12472 / DSM 30191 / JCM 1249 / CCUG 213 / NBRC 12614 / NCIMB 9131 / NCTC 9757 / MK).